We begin with the raw amino-acid sequence, 670 residues long: DNA ligase (670 aa).

NAD(+) contacts are provided by residues 35 to 39 (DSVYD), 84 to 85 (SL), and Glu-116. Lys-118 serves as the catalytic N6-AMP-lysine intermediate. NAD(+)-binding residues include Arg-139, Glu-176, Lys-293, and Lys-317. The Zn(2+) site is built by Cys-411, Cys-414, Cys-429, and Cys-435. Residues 592–670 (VVKSEIAGKT…EEAFLKLLKS (79 aa)) enclose the BRCT domain.

The protein belongs to the NAD-dependent DNA ligase family. LigA subfamily. Mg(2+) serves as cofactor. It depends on Mn(2+) as a cofactor.

The enzyme catalyses NAD(+) + (deoxyribonucleotide)n-3'-hydroxyl + 5'-phospho-(deoxyribonucleotide)m = (deoxyribonucleotide)n+m + AMP + beta-nicotinamide D-nucleotide.. Functionally, DNA ligase that catalyzes the formation of phosphodiester linkages between 5'-phosphoryl and 3'-hydroxyl groups in double-stranded DNA using NAD as a coenzyme and as the energy source for the reaction. It is essential for DNA replication and repair of damaged DNA. This chain is DNA ligase, found in Coxiella burnetii (strain RSA 331 / Henzerling II).